The chain runs to 122 residues: Large ribosomal subunit protein uL29A (122 aa).

Positions 10–69 (QLGIKQIEERAAEIKADLAALRQKKNSGDVGANDIKTAKKNLARALTVRREKILEELVEA) form a coiled coil.

This sequence belongs to the universal ribosomal protein uL29 family. Component of the large ribosomal subunit.

It is found in the cytoplasm. The chain is Large ribosomal subunit protein uL29A (RPL35A) from Encephalitozoon cuniculi (strain GB-M1) (Microsporidian parasite).